The following is a 145-amino-acid chain: MTKKYLKVDVVSPLGSVFKGEADMVSLRGSAGEMGIAYGHTELLSTLPAGVVNVRKDQHTDVLYVSGGIVEVTPTRVTIMVDDMERAENLNQAEAEKARVRAKEVLKNPDASKLDIEAANKRLKEADARLKALNSSNGLYYSKDD.

Belongs to the ATPase epsilon chain family. As to quaternary structure, F-type ATPases have 2 components, CF(1) - the catalytic core - and CF(0) - the membrane proton channel. CF(1) has five subunits: alpha(3), beta(3), gamma(1), delta(1), epsilon(1). CF(0) has three main subunits: a, b and c.

It is found in the cell inner membrane. In terms of biological role, produces ATP from ADP in the presence of a proton gradient across the membrane. This chain is ATP synthase epsilon chain, found in Francisella tularensis subsp. mediasiatica (strain FSC147).